The following is a 144-amino-acid chain: Large ribosomal subunit protein uL15 (144 aa).

The tract at residues 1-53 (MRLNTLSPAEGAKHAPKRVGRGIGSGLGKTAGRGHKGQNSRSGGGVRRGFEGG) is disordered. Over residues 21-31 (RGIGSGLGKTA) the composition is skewed to gly residues.

This sequence belongs to the universal ribosomal protein uL15 family. Part of the 50S ribosomal subunit.

Binds to the 23S rRNA. In Serratia proteamaculans (strain 568), this protein is Large ribosomal subunit protein uL15.